A 346-amino-acid chain; its full sequence is Fusaric acid resistance protein FusC (346 aa).

The next 4 helical transmembrane spans lie at 10–30 (VIIGIVSAGVVSALVFPRYTG), 248–268 (VILALGWFWIETAWPSGVMLV), 291–311 (MGMGTALAVCTGFLLTFGIYP), and 315–335 (GFVLLCAALAPLLAIGIYMSL).

This sequence belongs to the aromatic acid exporter ArAE (TC 2.A.85) family.

It localises to the cell membrane. Involved in the resistance (detoxification) of the fungal toxin fusaric acid. This Burkholderia cepacia (Pseudomonas cepacia) protein is Fusaric acid resistance protein FusC (fusC).